The chain runs to 652 residues: Leucine aminopeptidase 2 (652 aa).

Residues 165-167 (QLE) and 293-298 (PYGGME) each bind a peptide. Histidine 322 contacts Zn(2+). Residue glutamate 323 is the Proton acceptor of the active site. Zn(2+) contacts are provided by histidine 326 and glutamate 345. The active-site Proton donor is the tyrosine 411.

Belongs to the peptidase M1 family. The cofactor is Zn(2+).

The protein resides in the cytoplasm. The protein localises to the nucleus. It carries out the reaction an epoxide + H2O = an ethanediol. Aminopeptidase that preferentially cleaves di- and tripeptides. Also has low epoxide hydrolase activity (in vitro). Can hydrolyze the epoxide leukotriene LTA(4) but it forms preferentially 5,6-dihydroxy-7,9,11,14-eicosatetraenoic acid rather than the cytokine leukotriene B(4) as the product compared to the homologous mammalian enzyme (in vitro). This is Leucine aminopeptidase 2 from Candida glabrata (strain ATCC 2001 / BCRC 20586 / JCM 3761 / NBRC 0622 / NRRL Y-65 / CBS 138) (Yeast).